Consider the following 158-residue polypeptide: Biotin carboxyl carrier protein of acetyl-CoA carboxylase (158 aa).

The Biotinyl-binding domain maps to 81 to 157 (YATIVSPMVG…DCGQALMKVE (77 aa)). K123 is subject to N6-biotinyllysine.

Its subcellular location is the plastid. The protein resides in the chloroplast. Its pathway is lipid metabolism; fatty acid biosynthesis. Its function is as follows. This protein is a component of the acetyl coenzyme A carboxylase complex; first, biotin carboxylase catalyzes the carboxylation of the carrier protein and then the transcarboxylase transfers the carboxyl group to form malonyl-CoA. This is Biotin carboxyl carrier protein of acetyl-CoA carboxylase (accB) from Pyropia yezoensis (Susabi-nori).